A 401-amino-acid chain; its full sequence is Elongation factor Tu, apicoplast (401 aa).

Residues 10–206 (KPHINIGTIG…ALDSYIPLPK (197 aa)) form the tr-type G domain. The tract at residues 19–26 (GHVDHGKT) is G1. Residue 19–26 (GHVDHGKT) coordinates GTP. Thr26 is a Mg(2+) binding site. Residues 60–64 (GITIK) are G2. Positions 81–84 (DCPG) are G3. Residues 81 to 85 (DCPGH) and 136 to 139 (NKID) contribute to the GTP site. The interval 136–139 (NKID) is G4. Residues 173–175 (SAL) form a G5 region.

The protein belongs to the TRAFAC class translation factor GTPase superfamily. Classic translation factor GTPase family. EF-Tu/EF-1A subfamily. As to quaternary structure, monomer.

Its subcellular location is the plastid. It is found in the apicoplast. It carries out the reaction GTP + H2O = GDP + phosphate + H(+). Functionally, GTP hydrolase that promotes the GTP-dependent binding of aminoacyl-tRNA to the A-site of ribosomes during protein biosynthesis. This Toxoplasma gondii protein is Elongation factor Tu, apicoplast (tufA).